Here is a 332-residue protein sequence, read N- to C-terminus: L-lactate dehydrogenase C chain (332 aa).

The residue at position 2 (Ser2) is a Blocked amino end (Ser). NAD(+)-binding positions include 29–57 (GNVG…DENK) and Arg99. 3 residues coordinate substrate: Arg106, Asn138, and Arg169. NAD(+) is bound at residue Asn138. His193 acts as the Proton acceptor in catalysis. Thr248 is a binding site for substrate.

It belongs to the LDH/MDH superfamily. LDH family. As to quaternary structure, homotetramer. Interacts with RABL2/RABL2A; binds preferentially to GTP-bound RABL2.

The protein localises to the cytoplasm. It carries out the reaction (S)-lactate + NAD(+) = pyruvate + NADH + H(+). Its pathway is fermentation; pyruvate fermentation to lactate; (S)-lactate from pyruvate: step 1/1. Its function is as follows. Possible role in sperm motility. The chain is L-lactate dehydrogenase C chain (Ldhc) from Rattus norvegicus (Rat).